A 417-amino-acid polypeptide reads, in one-letter code: Squamosa promoter-binding-like protein 14 (417 aa).

2 stretches are compositionally biased toward gly residues: residues 1-26 and 51-60; these read MEMA…GGGG and AGGGGTGSGS. Disordered stretches follow at residues 1-32 and 51-102; these read MEMA…EHRQ and AGGG…PPPP. Positions 61-74 are enriched in low complexity; it reads GSASAAPPSSSSKA. The segment covering 75-84 has biased composition (gly residues); sequence AGGGRGGGGK. The SBP-type zinc-finger motif lies at 101–178; sequence PPRCQVEGCG…AGHNERRRRP (78 aa). Zn(2+)-binding residues include cysteine 104, cysteine 109, cysteine 126, histidine 129, cysteine 145, cysteine 148, and histidine 152. The Bipartite nuclear localization signal motif lies at 161–177; that stretch reads KRSCRRRLAGHNERRRR. Phosphoserine is present on serine 163. Cysteine 164 lines the Zn(2+) pocket. The segment at 387-417 is disordered; the sequence is LQGNGPAPAPRIDPGSGSTFDQTSNTMDWSL. Positions 402–417 are enriched in polar residues; sequence SGSTFDQTSNTMDWSL.

Interacts with PCF1 and PCF2. Interacts with IPI1. Interacts with D53. Interacts with SLR1. Interacts (via C-terminus) with SHI1. Phosphorylated at Ser-163 in response to infection by the fungal pathogen Magnaporthe oryzae. In terms of processing, ubiquitinated by IPI1, which leads to proteasomal degradation. In terms of tissue distribution, expressed in young panicles. Expressed in the shoot apex at both the vegetative and reproductive stages. Highly expressed in the promordia of primary and secondary branches. Highly expressed in young panicles.

It localises to the nucleus. Transcriptional activator that binds to the SBP-box DNA core binding motif 5'-GTAC-3'. Can target the TCP motif 5'-TGGGCC/T-3' through interaction with PCF1 and PCF2. Key regulator of the plant architecture that controls shoot branching and panicle development. Promotes panicle branching. Promotes high grain yield. Binds to the promoters of TB1 and DEP1. Suppresses rice tillering mainly through positive regulation of TB1. Regulates plant height and panicle length through positive regulation of DEP1. Repressed by D53 in strigolactone (SL) signaling. Acts with D53 to mediate the SL-regulated tiller development. Functions as a direct downstream component of D53 in regulating tiller number and SL-induced gene expression. Binds directly to the D53 promoter and plays a critical role in the negative feedback regulation of SL-induced D53 expression. Involved in defense response against pathogens. Phosphorylated at Ser-163 in response to infection by the fungal pathogen Magnaporthe oryzae. Phosphorylation reduces SPL14/IPA1 binding to the GTAC site in the DEP1 promoter and enhances binding to the TGGGCC site in the WRKY45 promoter. Binding to the promoter of the pathogen defense gene WRKY45 activates its expression, leading to enhanced disease resistance. Reduces gibberellin-mediated disease susceptibility by stabilizing SLR1. Possesses transactivation activity in yeast cells. The sequence is that of Squamosa promoter-binding-like protein 14 from Oryza sativa subsp. japonica (Rice).